The primary structure comprises 317 residues: Transcription factor EC (317 aa).

Residues 1 to 44 (MTLDHQILNQSFKRSHPPTPSSELLVQHGHPSPESDTGLTGNPL) form a disordered region. The necessary for transcriptional transactivation stretch occupies residues 1–90 (MTLDHQILNQ…GLTSASCPSS (90 aa)). The segment covering 34 to 43 (ESDTGLTGNP) has biased composition (polar residues). The 54-residue stretch at 110 to 163 (QKKDNHNLIERRRRYNINYRIKELGTLIPKSNDPDMRWNKGTILKASVEYIKWL) folds into the bHLH domain. The necessary for transcriptional transactivation stretch occupies residues 241-317 (TSPELCDQAM…SFSSEDGDEL (77 aa)). The tract at residues 297–317 (PAVSKESSRRSSFSSEDGDEL) is disordered.

Belongs to the MiT/TFE family. As to quaternary structure, homodimer. Forms heterodimers with MITF and TFE3. Interacts with MITF.

Its subcellular location is the nucleus. In terms of biological role, transcriptional regulator that acts as a repressor or an activator. Acts as a transcriptional repressor on minimal promoter containing element F (that includes an E-box sequence). Binds to element F in an E-box sequence-specific manner. Acts as a transcriptional transactivator on the proximal promoter region of the tartrate-resistant acid phosphatase (TRAP) E-box containing promoter. Collaborates with MITF in target gene activation. Acts as a transcriptional repressor on minimal promoter containing mu E3 enhancer sequence. Binds to mu E3 DNA sequence of the immunoglobulin heavy-chain gene enhancer. Binds DNA in a homo- or heterodimeric form. The polypeptide is Transcription factor EC (TFEC) (Bos taurus (Bovine)).